Consider the following 245-residue polypeptide: Ribosomal protein L11 methyltransferase (245 aa).

Residues Thr-101, Gly-122, Asp-144, and Asn-184 each coordinate S-adenosyl-L-methionine.

The protein belongs to the methyltransferase superfamily. PrmA family.

The protein localises to the cytoplasm. It carries out the reaction L-lysyl-[protein] + 3 S-adenosyl-L-methionine = N(6),N(6),N(6)-trimethyl-L-lysyl-[protein] + 3 S-adenosyl-L-homocysteine + 3 H(+). Methylates ribosomal protein L11. In Aquifex aeolicus (strain VF5), this protein is Ribosomal protein L11 methyltransferase.